The chain runs to 382 residues: Mannitol-1-phosphate 5-dehydrogenase (382 aa).

3 to 14 lines the NAD(+) pocket; sequence ALHFGAGNIGRG. Position 269 is an N6-acetyllysine (K269).

It belongs to the mannitol dehydrogenase family.

It carries out the reaction D-mannitol 1-phosphate + NAD(+) = beta-D-fructose 6-phosphate + NADH + H(+). This chain is Mannitol-1-phosphate 5-dehydrogenase, found in Shigella boydii serotype 18 (strain CDC 3083-94 / BS512).